Consider the following 681-residue polypeptide: Potassium-transporting ATPase ATP-binding subunit 1 (681 aa).

4 consecutive transmembrane segments (helical) span residues 30-50 (LLVY…FFGI), 59-79 (LAIA…EAIA), 216-236 (ILLV…LPFT), and 255-275 (IALL…SIGI). Catalysis depends on D306, which acts as the 4-aspartylphosphate intermediate. ATP-binding positions include D343, E347, 376–383 (FTATTRMS), and K394. Residues D517 and D521 each contribute to the Mg(2+) site. 3 helical membrane-spanning segments follow: residues 587–607 (FAII…LNLM), 615–635 (AILS…PLSL), and 661–681 (LIAP…LGIV).

The protein belongs to the cation transport ATPase (P-type) (TC 3.A.3) family. Type IA subfamily. The system is composed of three essential subunits: KdpA, KdpB and KdpC.

The protein localises to the cell membrane. The catalysed reaction is K(+)(out) + ATP + H2O = K(+)(in) + ADP + phosphate + H(+). Functionally, part of the high-affinity ATP-driven potassium transport (or Kdp) system, which catalyzes the hydrolysis of ATP coupled with the electrogenic transport of potassium into the cytoplasm. This subunit is responsible for energy coupling to the transport system and for the release of the potassium ions to the cytoplasm. The polypeptide is Potassium-transporting ATPase ATP-binding subunit 1 (Listeria innocua serovar 6a (strain ATCC BAA-680 / CLIP 11262)).